The following is a 142-amino-acid chain: Lysosomal enzyme trafficking factor (142 aa).

Transmembrane regions (helical) follow at residues 8–28 and 76–96; these read MGWIGVGLYLLASVAAVYYIF and LLPFWVWATIFLLPYLQVFLF.

Belongs to the LYSET family.

It is found in the golgi apparatus membrane. In terms of biological role, required for mannose-6-phosphate-dependent trafficking of lysosomal enzymes. LYSET bridges GlcNAc-1-phosphate transferase (GNPTAB), to the membrane-bound transcription factor site-1 protease (MBTPS1), thus allowing proteolytic activation of the GNPTAB. GNPTAB is involved in the regulation of M6P-dependent Golgi-to-lysosome trafficking of lysosomal enzymes. LYSET is thus an essential factor for maturation and delivery of lysosomal hydrolases. The protein is Lysosomal enzyme trafficking factor (tmem251) of Danio rerio (Zebrafish).